Reading from the N-terminus, the 93-residue chain is Cell division protein CrgA (93 aa).

A run of 2 helical transmembrane segments spans residues 31 to 51 and 70 to 90; these read VWFV…LMVF and LGPW…LLTM.

Belongs to the CrgA family.

The protein localises to the cell membrane. In terms of biological role, involved in cell division. The protein is Cell division protein CrgA of Mycobacterium leprae (strain Br4923).